The sequence spans 496 residues: D-2-hydroxyglutarate--pyruvate transhydrogenase DLD3 (496 aa).

Lys17 participates in a covalent cross-link: Glycyl lysine isopeptide (Lys-Gly) (interchain with G-Cter in ubiquitin). In terms of domain architecture, FAD-binding PCMH-type spans 64 to 243 (YRGQSNLILL…TGVSIVAAAK (180 aa)).

This sequence belongs to the FAD-binding oxidoreductase/transferase type 4 family. The cofactor is FAD.

It is found in the cytoplasm. It catalyses the reaction (R)-lactate + 2 Fe(III)-[cytochrome c] = 2 Fe(II)-[cytochrome c] + pyruvate + 2 H(+). The enzyme catalyses (R)-2-hydroxyglutarate + pyruvate = (R)-lactate + 2-oxoglutarate. In terms of biological role, catalyzes the reversible oxidation of (R)-2-hydroxyglutarate to 2-oxoglutarate coupled to reduction of pyruvate to (R)-lactate. Can also use oxaloacetate as electron acceptor instead of pyruvate producing (R)-malate. The protein is D-2-hydroxyglutarate--pyruvate transhydrogenase DLD3 (DLD3) of Saccharomyces cerevisiae (strain ATCC 204508 / S288c) (Baker's yeast).